A 186-amino-acid chain; its full sequence is Threonylcarbamoyl-AMP synthase (186 aa).

Positions 6 to 186 (GFRLRLAANA…FDAMSGRRIR (181 aa)) constitute a YrdC-like domain.

The protein belongs to the SUA5 family. TsaC subfamily.

The protein localises to the cytoplasm. The catalysed reaction is L-threonine + hydrogencarbonate + ATP = L-threonylcarbamoyladenylate + diphosphate + H2O. In terms of biological role, required for the formation of a threonylcarbamoyl group on adenosine at position 37 (t(6)A37) in tRNAs that read codons beginning with adenine. Catalyzes the conversion of L-threonine, HCO(3)(-)/CO(2) and ATP to give threonylcarbamoyl-AMP (TC-AMP) as the acyladenylate intermediate, with the release of diphosphate. The protein is Threonylcarbamoyl-AMP synthase of Methylococcus capsulatus (strain ATCC 33009 / NCIMB 11132 / Bath).